A 509-amino-acid chain; its full sequence is tRNA (guanine(37)-N(1))-methyltransferase (509 aa).

Residues H289, 327 to 328, 355 to 356, and N387 each bind S-adenosyl-L-methionine; these read DL and DG. A disordered region spans residues 478–509; the sequence is TRNPENHEDPPLKRQRTAEAFSDEKTQIVSNT.

The protein belongs to the class I-like SAM-binding methyltransferase superfamily. TRM5/TYW2 family. As to quaternary structure, monomer.

The protein localises to the mitochondrion matrix. Its subcellular location is the nucleus. It is found in the cytoplasm. It catalyses the reaction guanosine(37) in tRNA + S-adenosyl-L-methionine = N(1)-methylguanosine(37) in tRNA + S-adenosyl-L-homocysteine + H(+). Its function is as follows. Involved in mitochondrial tRNA methylation. Specifically methylates the N1 position of guanosine-37 in various tRNAs. Methylation is not dependent on the nature of the nucleoside 5' of the target nucleoside. This is the first step in the biosynthesis of wybutosine (yW), a modified base adjacent to the anticodon of tRNAs and required for accurate decoding. The protein is tRNA (guanine(37)-N(1))-methyltransferase of Homo sapiens (Human).